A 146-amino-acid polypeptide reads, in one-letter code: Large ribosomal subunit protein uL11 (146 aa).

It belongs to the universal ribosomal protein uL11 family. In terms of assembly, part of the ribosomal stalk of the 50S ribosomal subunit. Interacts with L10 and the large rRNA to form the base of the stalk. L10 forms an elongated spine to which L12 dimers bind in a sequential fashion forming a multimeric L10(L12)X complex. One or more lysine residues are methylated.

Its function is as follows. Forms part of the ribosomal stalk which helps the ribosome interact with GTP-bound translation factors. The polypeptide is Large ribosomal subunit protein uL11 (Salinibacter ruber (strain DSM 13855 / M31)).